Here is a 270-residue protein sequence, read N- to C-terminus: Tryptophan synthase alpha chain (270 aa).

Residues Glu-57 and Asp-68 each act as proton acceptor in the active site.

It belongs to the TrpA family. As to quaternary structure, tetramer of two alpha and two beta chains.

The catalysed reaction is (1S,2R)-1-C-(indol-3-yl)glycerol 3-phosphate + L-serine = D-glyceraldehyde 3-phosphate + L-tryptophan + H2O. It functions in the pathway amino-acid biosynthesis; L-tryptophan biosynthesis; L-tryptophan from chorismate: step 5/5. The alpha subunit is responsible for the aldol cleavage of indoleglycerol phosphate to indole and glyceraldehyde 3-phosphate. This Mycobacterium bovis (strain ATCC BAA-935 / AF2122/97) protein is Tryptophan synthase alpha chain.